Consider the following 454-residue polypeptide: Septin-10 (454 aa).

The region spanning 63-329 (QGFCFNILCV…ELYRRCKLEE (267 aa)) is the Septin-type G domain. The interval 73-80 (GETGIGKS) is G1 motif. Residues 73-80 (GETGIGKS), glycine 128, 209-217 (KADTVSKTE), glycine 263, and arginine 278 each bind GTP. The G3 motif stretch occupies residues 125–128 (NTVG). The segment at 208-211 (AKAD) is G4 motif.

It belongs to the TRAFAC class TrmE-Era-EngA-EngB-Septin-like GTPase superfamily. Septin GTPase family. Septins polymerize into heterooligomeric protein complexes that form filaments, and can associate with cellular membranes, actin filaments and microtubules. GTPase activity is required for filament formation. Interacts with ADGB. Post-translationally, proteolytically cleaved in vitro in a calmodulin-dependent manner. Widely expressed. Abundantly expressed in heart and kidney, placenta, skeletal muscles, liver and lung, as well as various tumor cell lines.

It localises to the cytoplasm. It is found in the cytoskeleton. The protein localises to the cell projection. Its subcellular location is the cilium. The protein resides in the flagellum. Functionally, filament-forming cytoskeletal GTPase. May play a role in cytokinesis (Potential). This chain is Septin-10, found in Homo sapiens (Human).